Here is a 738-residue protein sequence, read N- to C-terminus: Ent-kaurene synthase-like 1 (738 aa).

The Mg(2+) site is built by aspartate 487, aspartate 491, asparagine 631, aspartate 632, and glutamate 639. Residues 487 to 491 carry the DDXXD motif motif; sequence DDFFD.

Belongs to the terpene synthase family. The cofactor is Mg(2+).

The enzyme catalyses ent-copalyl diphosphate = ent-kaur-16-ene + diphosphate. Its pathway is secondary metabolite biosynthesis; terpenoid biosynthesis. In terms of biological role, diterpene cyclase involved in the biosynthesis of labdane-related diterpenoids (LRDs) natural products. Catalyzes the cyclization of ent-CDP into ent-kaurene. This chain is Ent-kaurene synthase-like 1, found in Ricinus communis (Castor bean).